Here is a 493-residue protein sequence, read N- to C-terminus: UDP-glucose 6-dehydrogenase (493 aa).

NAD(+) contacts are provided by residues 11–16 (GAGYVG), aspartate 36, arginine 41, and 89–93 (VNTPT). Residues 88–110 (SVNTPTKTYGMGKGRAADLKYIE) form a disordered region. Lysine 107 bears the N6-acetyllysine mark. Residues 129-135 (KSTVPVR) are allosteric switch region. NAD(+) is bound at residue 130 to 132 (STV). Glutamate 161 (proton donor/acceptor) is an active-site residue. Residues 161 to 165 (EFLAE), 220 to 224 (KLAAN), arginine 260, and 267 to 273 (KASVGFG) contribute to the substrate site. Glutamate 165 is an NAD(+) binding site. Catalysis depends on lysine 220, which acts as the Proton donor/acceptor. Cysteine 276 acts as the Nucleophile in catalysis. NAD(+) is bound at residue 276–279 (CFQK). The segment at 321 to 325 (SLFNT) is important for formation of active hexamer structure. 338–339 (FK) is a binding site for substrate. Arginine 346 lines the NAD(+) pocket. Arginine 442 contacts substrate. A disordered region spans residues 466 to 493 (VSSKRIPYTPGEIPKFSLQDPPNKKPKV). The residue at position 474 (threonine 474) is a Phosphothreonine.

This sequence belongs to the UDP-glucose/GDP-mannose dehydrogenase family. In terms of assembly, homohexamer.

It carries out the reaction UDP-alpha-D-glucose + 2 NAD(+) + H2O = UDP-alpha-D-glucuronate + 2 NADH + 3 H(+). The protein operates within nucleotide-sugar biosynthesis; UDP-alpha-D-glucuronate biosynthesis; UDP-alpha-D-glucuronate from UDP-alpha-D-glucose: step 1/1. Its activity is regulated as follows. UDP-alpha-D-xylose (UDX) acts as a feedback inhibitor. It binds at the same site as the substrate, but functions as allosteric inhibitor by triggering a conformation change that disrupts the active hexameric ring structure and gives rise to an inactive, horseshoe-shaped hexamer. Its function is as follows. Catalyzes the formation of UDP-alpha-D-glucuronate, a constituent of complex glycosaminoglycans. Required for the biosynthesis of chondroitin sulfate and heparan sulfate. Required for embryonic development via its role in the biosynthesis of glycosaminoglycans. Required for proper brain and neuronal development. This is UDP-glucose 6-dehydrogenase (Ugdh) from Mus musculus (Mouse).